A 329-amino-acid chain; its full sequence is Ribosomal RNA small subunit methyltransferase H (329 aa).

S-adenosyl-L-methionine is bound by residues 47 to 49, aspartate 67, phenylalanine 93, aspartate 115, and glutamine 122; that span reads GGH.

Belongs to the methyltransferase superfamily. RsmH family.

It localises to the cytoplasm. It catalyses the reaction cytidine(1402) in 16S rRNA + S-adenosyl-L-methionine = N(4)-methylcytidine(1402) in 16S rRNA + S-adenosyl-L-homocysteine + H(+). Specifically methylates the N4 position of cytidine in position 1402 (C1402) of 16S rRNA. This is Ribosomal RNA small subunit methyltransferase H from Blochmanniella pennsylvanica (strain BPEN).